Reading from the N-terminus, the 432-residue chain is Ribosomal protein uS12 methylthiotransferase RimO (432 aa).

The 119-residue stretch at 4–122 (KTIDIITLGC…LLQDLGKAYH (119 aa)) folds into the MTTase N-terminal domain. Cys13, Cys51, Cys85, Cys146, Cys150, and Cys153 together coordinate [4Fe-4S] cluster. The Radical SAM core domain occupies 132–363 (TTPKHYAYLK…MAIQQGISTE (232 aa)). Positions 366–432 (ASKVGQKMKV…DEFDLFGEII (67 aa)) constitute a TRAM domain.

Belongs to the methylthiotransferase family. RimO subfamily. [4Fe-4S] cluster is required as a cofactor.

Its subcellular location is the cytoplasm. The catalysed reaction is L-aspartate(89)-[ribosomal protein uS12]-hydrogen + (sulfur carrier)-SH + AH2 + 2 S-adenosyl-L-methionine = 3-methylsulfanyl-L-aspartate(89)-[ribosomal protein uS12]-hydrogen + (sulfur carrier)-H + 5'-deoxyadenosine + L-methionine + A + S-adenosyl-L-homocysteine + 2 H(+). Functionally, catalyzes the methylthiolation of an aspartic acid residue of ribosomal protein uS12. This chain is Ribosomal protein uS12 methylthiotransferase RimO, found in Bacteroides fragilis (strain ATCC 25285 / DSM 2151 / CCUG 4856 / JCM 11019 / LMG 10263 / NCTC 9343 / Onslow / VPI 2553 / EN-2).